Consider the following 345-residue polypeptide: Olfactory receptor 11G2 (345 aa).

Residues 1–62 lie on the Extracellular side of the membrane; it reads MHFLSQNDLN…LGFPCPREGQ (62 aa). The N-linked (GlcNAc...) asparagine glycan is linked to Asn-43. The chain crosses the membrane as a helical span at residues 63-83; the sequence is ILLFVLFTVVYLLTLMGNGSI. At 84–92 the chain is on the cytoplasmic side; the sequence is ICAVHWDQR. Residues 93 to 113 form a helical membrane-spanning segment; the sequence is LHAPMYILLANFSFLEICYVT. Residues 114–135 lie on the Extracellular side of the membrane; it reads STVPSMLANFLSDTKIISFSGC. Cys-135 and Cys-217 are joined by a disulfide. The helical transmembrane segment at 136-156 threads the bilayer; sequence FLQFYFFFSLGSTECFFLAVM. Over 157–181 the chain is Cytoplasmic; that stretch reads AFDRYLAICRPLRYPTIMTRRLCTN. A helical membrane pass occupies residues 182 to 202; it reads LVVNCWVLGFIWFLIPIVNIS. Residues 203–241 are Extracellular-facing; the sequence is QMSFCGSRIIDHFLCDPAPLLTLTCKKGPVIELVFSVLS. Residues 242-264 form a helical membrane-spanning segment; it reads PLPVFMLFLFIVGSYALVVRAVL. The Cytoplasmic portion of the chain corresponds to 265-275; it reads RVPSAAGRRKA. Residues 276–296 traverse the membrane as a helical segment; that stretch reads FSTCGSHLAVVSLFYGSVLVM. Residues 297 to 309 lie on the Extracellular side of the membrane; that stretch reads YGSPPSKNEAGKQ. The helical transmembrane segment at 310–330 threads the bilayer; the sequence is KTVTLFYSVVTPLLNPVIYSL. The Cytoplasmic segment spans residues 331 to 345; the sequence is RNKDMRKALKKFWGT.

It belongs to the G-protein coupled receptor 1 family.

The protein localises to the cell membrane. Functionally, odorant receptor. In Homo sapiens (Human), this protein is Olfactory receptor 11G2 (OR11G2).